Here is an 836-residue protein sequence, read N- to C-terminus: Protein PDC2 (836 aa).

The HTH CENPB-type domain maps to 64 to 139 (ELIRRRKRAN…VKKLNINITG (76 aa)). Low complexity predominate over residues 626–640 (TTSTSVVSDSPSGTT). The tract at residues 626–732 (TTSTSVVSDS…NVQFGNGAGS (107 aa)) is disordered. Polar residues predominate over residues 641–651 (QKYNNISTYPN). Positions 677–698 (GQELQNPQGQQQQEQQQQQQHQ) are enriched in low complexity. Over residues 699 to 711 (MSGYNFSPISNIE) the composition is skewed to polar residues.

In terms of biological role, essential for the synthesis of pyruvate decarboxylase. The sequence is that of Protein PDC2 (PDC2) from Candida albicans (Yeast).